The chain runs to 310 residues: MTATVRVTAPAKINLHLEVLGQRSDGFHELAMVMQSIDLADQLDCSNRADGLIQLSCDQPGLSCGNDNLVFRAAALLRQRSGFHELGAQIHLRKRIPIGAGLAGGSSDGAAALLALNTLWGLGHTHDHLCAMAAELGSDMPFCLAGGIQLCFGRGECLESVPAAEQSLGVVLVKNPTVSVSTPWAYGECRRLKGDHYLSDEVAFAQRRQDLRAASWLNPLRAAEPPPLRNDLQDVVEPQTASVQMALRLLQDLPGQLRTAMSGSGPSCFALFPNRLDADQALDVARDSFAQAGFDAWSCSFVGHGAKLMP.

Lys-12 is a catalytic residue. 97-107 contacts ATP; it reads PIGAGLAGGSS. Asp-139 is a catalytic residue.

It belongs to the GHMP kinase family. IspE subfamily.

The enzyme catalyses 4-CDP-2-C-methyl-D-erythritol + ATP = 4-CDP-2-C-methyl-D-erythritol 2-phosphate + ADP + H(+). It functions in the pathway isoprenoid biosynthesis; isopentenyl diphosphate biosynthesis via DXP pathway; isopentenyl diphosphate from 1-deoxy-D-xylulose 5-phosphate: step 3/6. Catalyzes the phosphorylation of the position 2 hydroxy group of 4-diphosphocytidyl-2C-methyl-D-erythritol. In Synechococcus sp. (strain CC9311), this protein is 4-diphosphocytidyl-2-C-methyl-D-erythritol kinase.